A 20-amino-acid polypeptide reads, in one-letter code: Cathepsin L-like cysteine proteinase (20 aa).

This sequence belongs to the peptidase C1 family.

It localises to the lysosome. Functionally, thiol protease. This Fasciola hepatica (Liver fluke) protein is Cathepsin L-like cysteine proteinase.